A 748-amino-acid chain; its full sequence is Protein REPRESSOR OF SILENCING 3 (748 aa).

The region spanning 10-86 is the RRM domain; sequence VRLHVGGLGE…GRLRLEKAKE (77 aa). Disordered regions lie at residues 244–318, 350–531, 579–600, and 729–748; these read KSIL…QSID, GSSK…VSDT, VDEE…GGSS, and EWAK…NSEE. Residues 266–288 are compositionally biased toward polar residues; that stretch reads THPSKNRQTISLEETGRQESSQA. Basic and acidic residues predominate over residues 294 to 314; sequence KPSEVVPDKSSDEPSRTKDLE. Basic residues predominate over residues 373 to 382; it reads LKKKTKRKRV. 3 stretches are compositionally biased toward acidic residues: residues 403–416, 439–472, and 491–518; these read DTMA…DSDA, DDSD…DAVE, and ESDD…DVGS. Polar residues predominate over residues 520 to 531; that stretch reads DSGSLADTVSDT.

As to expression, ubiquitously expressed.

Its subcellular location is the nucleus. The protein resides in the nucleolus. It localises to the nucleoplasm. In terms of biological role, RNA-binding protein required for DNA demethylation and to eluviate siRNA-mediated transcriptional gene silencing (TGS), probably by guiding ROS1. Can bind specifically single stranded G-rich RNAs of 21-, 24- or 26-nt corresponding to promoter sequence of target genes; this interaction directs demethylation of target sequences. In Arabidopsis thaliana (Mouse-ear cress), this protein is Protein REPRESSOR OF SILENCING 3.